Here is a 280-residue protein sequence, read N- to C-terminus: Pantothenate synthetase (280 aa).

26 to 33 provides a ligand contact to ATP; sequence MGNLHEGH. The active-site Proton donor is the His-33. Gln-57 contributes to the (R)-pantoate binding site. Gln-57 contacts beta-alanine. 145-148 provides a ligand contact to ATP; the sequence is GKKD. Residue Gln-151 participates in (R)-pantoate binding. Residues Val-174 and 182 to 185 contribute to the ATP site; that span reads LSSR.

This sequence belongs to the pantothenate synthetase family. In terms of assembly, homodimer.

It is found in the cytoplasm. The catalysed reaction is (R)-pantoate + beta-alanine + ATP = (R)-pantothenate + AMP + diphosphate + H(+). It participates in cofactor biosynthesis; (R)-pantothenate biosynthesis; (R)-pantothenate from (R)-pantoate and beta-alanine: step 1/1. In terms of biological role, catalyzes the condensation of pantoate with beta-alanine in an ATP-dependent reaction via a pantoyl-adenylate intermediate. This chain is Pantothenate synthetase, found in Bordetella bronchiseptica (strain ATCC BAA-588 / NCTC 13252 / RB50) (Alcaligenes bronchisepticus).